A 319-amino-acid chain; its full sequence is Cytochrome c biogenesis protein CcsA (319 aa).

The next 8 helical transmembrane spans lie at 11–31 (VNFA…SLAF), 34–54 (ISGL…ALAL), 71–91 (LYES…FIES), 97–117 (LIGA…SLAL), 142–162 (IMMI…LFLI), 227–247 (IIGL…VWAN), 254–274 (WSWD…AAYL), and 288–308 (AILA…VNFL).

It belongs to the CcmF/CycK/Ccl1/NrfE/CcsA family. In terms of assembly, may interact with Ccs1.

It localises to the plastid. It is found in the chloroplast thylakoid membrane. Required during biogenesis of c-type cytochromes (cytochrome c6 and cytochrome f) at the step of heme attachment. The chain is Cytochrome c biogenesis protein CcsA from Porphyra purpurea (Red seaweed).